Reading from the N-terminus, the 274-residue chain is tRNA pseudouridine synthase A (274 aa).

The Nucleophile role is filled by Asp56. Position 109 (Tyr109) interacts with substrate.

This sequence belongs to the tRNA pseudouridine synthase TruA family.

It carries out the reaction uridine(38/39/40) in tRNA = pseudouridine(38/39/40) in tRNA. In terms of biological role, formation of pseudouridine at positions 38, 39 and 40 in the anticodon stem and loop of transfer RNAs. The sequence is that of tRNA pseudouridine synthase A from Methanosphaera stadtmanae (strain ATCC 43021 / DSM 3091 / JCM 11832 / MCB-3).